A 447-amino-acid polypeptide reads, in one-letter code: tRNA(Ile)-lysidine synthase (447 aa).

Residue 31 to 36 (SGGMDS) coordinates ATP.

This sequence belongs to the tRNA(Ile)-lysidine synthase family.

It is found in the cytoplasm. It catalyses the reaction cytidine(34) in tRNA(Ile2) + L-lysine + ATP = lysidine(34) in tRNA(Ile2) + AMP + diphosphate + H(+). In terms of biological role, ligates lysine onto the cytidine present at position 34 of the AUA codon-specific tRNA(Ile) that contains the anticodon CAU, in an ATP-dependent manner. Cytidine is converted to lysidine, thus changing the amino acid specificity of the tRNA from methionine to isoleucine. The protein is tRNA(Ile)-lysidine synthase of Pseudothermotoga lettingae (strain ATCC BAA-301 / DSM 14385 / NBRC 107922 / TMO) (Thermotoga lettingae).